The sequence spans 106 residues: Large ribosomal subunit protein uL24 (106 aa).

The protein belongs to the universal ribosomal protein uL24 family. Part of the 50S ribosomal subunit.

Its function is as follows. One of two assembly initiator proteins, it binds directly to the 5'-end of the 23S rRNA, where it nucleates assembly of the 50S subunit. Functionally, one of the proteins that surrounds the polypeptide exit tunnel on the outside of the subunit. This is Large ribosomal subunit protein uL24 from Dechloromonas aromatica (strain RCB).